A 594-amino-acid polypeptide reads, in one-letter code: Aspartate--tRNA(Asp/Asn) ligase (594 aa).

L-aspartate is bound at residue glutamate 173. Residues 197–200 (QLFK) form an aspartate region. Position 219 (arginine 219) interacts with L-aspartate. Residues 219–221 (RDE) and glutamine 228 each bind ATP. Histidine 451 lines the L-aspartate pocket. Position 485 (glutamate 485) interacts with ATP. L-aspartate is bound at residue arginine 492. Residue 537–540 (GWDR) participates in ATP binding. The segment at 566 to 594 (PLTDAPAPITAQQRKESGIDAQPKRVQQA) is disordered.

The protein belongs to the class-II aminoacyl-tRNA synthetase family. Type 1 subfamily. As to quaternary structure, homodimer.

Its subcellular location is the cytoplasm. The enzyme catalyses tRNA(Asx) + L-aspartate + ATP = L-aspartyl-tRNA(Asx) + AMP + diphosphate. Functionally, aspartyl-tRNA synthetase with relaxed tRNA specificity since it is able to aspartylate not only its cognate tRNA(Asp) but also tRNA(Asn). Reaction proceeds in two steps: L-aspartate is first activated by ATP to form Asp-AMP and then transferred to the acceptor end of tRNA(Asp/Asn). This is Aspartate--tRNA(Asp/Asn) ligase from Mycobacterium tuberculosis (strain CDC 1551 / Oshkosh).